The following is a 691-amino-acid chain: Tumor necrosis factor alpha-induced protein 2 (691 aa).

The tract at residues 9–111 (QGFPGQQSVP…KPRPELDGPL (103 aa)) is disordered. Over residues 12 to 31 (PGQQSVPGTLNFAVSPQKPR) the composition is skewed to polar residues. Low complexity predominate over residues 33–45 (TSEAESETSMSEA). Positions 91 to 107 (QPRLSDLEVQPKPRPEL) are enriched in basic and acidic residues.

This sequence belongs to the SEC6 family.

Functionally, may play a role as a mediator of inflammation and angiogenesis. This Mus musculus (Mouse) protein is Tumor necrosis factor alpha-induced protein 2 (Tnfaip2).